Here is a 399-residue protein sequence, read N- to C-terminus: Accessory Sec system protein translocase subunit SecY2 (399 aa).

Transmembrane regions (helical) follow at residues 14-34 (IFFT…SIVS), 60-80 (LNIF…LTLI), 102-122 (ALTL…YINK), 128-148 (SNML…VWLA), 152-172 (TTYG…KSIF), 183-203 (ASLI…LFFI), 237-257 (ISIM…NFIG), 272-292 (FTNP…GYFL), 335-355 (WFGS…ALLV), and 362-382 (VYFT…AETI).

Belongs to the SecY/SEC61-alpha family. SecY2 subfamily. In terms of assembly, component of the accessory SecA2/SecY2 protein translocase complex required to export cell wall proteins. May form heterotrimers with SecE and SecG subunits.

The protein resides in the cell membrane. Part of the accessory SecA2/SecY2 system specifically required for export of possible cell wall proteins. The central subunit of a protein translocation channel. The sequence is that of Accessory Sec system protein translocase subunit SecY2 from Staphylococcus epidermidis (strain ATCC 12228 / FDA PCI 1200).